Reading from the N-terminus, the 110-residue chain is MSVVIRLARAGTKKRPVYHVVVADSRFPRDGRFIERLGHFNPLLPKDNEARLKLDLDKVKAWVAKGAQPSDRVARFLDAAGVMKREARNNPEKAVPRKERKAAAEAAAKK.

Residues 87 to 110 (ARNNPEKAVPRKERKAAAEAAAKK) form a disordered region.

It belongs to the bacterial ribosomal protein bS16 family.

The polypeptide is Small ribosomal subunit protein bS16 (Rhodopseudomonas palustris (strain BisA53)).